A 101-amino-acid polypeptide reads, in one-letter code: Urease subunit beta (101 aa).

Belongs to the urease beta subunit family. In terms of assembly, heterotrimer of UreA (gamma), UreB (beta) and UreC (alpha) subunits. Three heterotrimers associate to form the active enzyme.

It is found in the cytoplasm. The catalysed reaction is urea + 2 H2O + H(+) = hydrogencarbonate + 2 NH4(+). Its pathway is nitrogen metabolism; urea degradation; CO(2) and NH(3) from urea (urease route): step 1/1. The polypeptide is Urease subunit beta (Rhizobium rhizogenes (strain K84 / ATCC BAA-868) (Agrobacterium radiobacter)).